The primary structure comprises 326 residues: Probable magnesium transporter NIPA7 (326 aa).

Topologically, residues 1 to 4 (MVSD) are extracellular. Residues 5–25 (NEMGLVLAVSSSVFIGSSFIL) traverse the membrane as a helical segment. The Cytoplasmic portion of the chain corresponds to 26-51 (KKKGLKRAAANGTRAGFGGYTYLLEP). The chain crosses the membrane as a helical span at residues 52–72 (LWWVGLVTMTFGEIANFVAYV). Residues 73–76 (YAPA) lie on the Extracellular side of the membrane. A helical transmembrane segment spans residues 77 to 97 (VLVTPLGALSIIISAVLAHFL). Residues 98–104 (LDEKLRK) lie on the Cytoplasmic side of the membrane. A helical transmembrane segment spans residues 105–125 (MGVWGCVCCIVGSVMIVIHAP). Residues 126 to 142 (QEQTPNSVEEIWKLAMQ) are Extracellular-facing. The chain crosses the membrane as a helical span at residues 143–163 (PAFLIYVAISMSIVLALILYC). Topologically, residues 164-169 (EPLCGQ) are cytoplasmic. Residues 170 to 190 (TNILVYIGICSLMGSLTVMSI) traverse the membrane as a helical segment. At 191-209 (KAVGIAIKLTFEGINQIWY) the chain is on the extracellular side. Residues 210-230 (PETWFFAMVAAICVVMQMIYL) traverse the membrane as a helical segment. Topologically, residues 231 to 240 (NKALDTFNAA) are cytoplasmic. A helical transmembrane segment spans residues 241–261 (IVSPIYYVMFTTLTIVASAIM). Residues 262–272 (FKDWNGQNTDS) are Extracellular-facing. Residues 273–293 (IASEICGFITVLTGTVILHST) traverse the membrane as a helical segment. At 294–326 (REEEQASPRRMRWQDSGKSFDEEHLTSLYSPEY) the chain is on the cytoplasmic side.

This sequence belongs to the NIPA (TC 2.A.7) family. Homodimer.

It localises to the cell membrane. It is found in the early endosome. Its function is as follows. Acts as a Mg(2+) transporter. Can also transport other divalent cations such as Fe(2+), Sr(2+), Ba(2+), Mn(2+) and Co(2+) but to a much less extent than Mg(2+). This Arabidopsis thaliana (Mouse-ear cress) protein is Probable magnesium transporter NIPA7.